The primary structure comprises 477 residues: Delayed-rectifier potassium channel regulatory subunit KCNS2 (477 aa).

Residues 1–184 (MTGQSLWDVS…LALDNPGYSV (184 aa)) are Cytoplasmic-facing. Residues 185–206 (LSRVFSILSILVVMGSIITMCL) form a helical membrane-spanning segment. Over 207–225 (NSLPDFQIPDSQGNPGEDP) the chain is Extracellular. Residues 226-248 (RFEIVEHFGIAWFTFELVARFAV) traverse the membrane as a helical segment. Topologically, residues 249-259 (APDFLKFFKNA) are cytoplasmic. Residues 260–280 (LNLIDLMSIVPFYITLVVNLV) traverse the membrane as a helical segment. Residues 281–290 (VESTPTLANL) lie on the Extracellular side of the membrane. Residues 291 to 311 (GRVAQVLRLMRIFRILKLARH) form a helical; Voltage-sensor membrane-spanning segment. At 312–326 (STGLRSLGATLKYSY) the chain is on the cytoplasmic side. Residues 327-348 (KEVGLLLLYLSVGISIFSVVAY) traverse the membrane as a helical segment. Residues 349-361 (TIEKEENEGLATI) lie on the Extracellular side of the membrane. Positions 362 to 373 (PACWWWATVSMT) form an intramembrane region, helical. Positions 374 to 379 (TVGYGD) match the Selectivity filter motif. Residues 374–381 (TVGYGDVV) lie within the membrane without spanning it. Topologically, residues 382–388 (PGTTAGK) are extracellular. Residues 389–417 (LTASACILAGILVVVLPITLIFNKFSHFY) form a helical membrane-spanning segment. Over 418–477 (RRQKQLESAMRSCDFGDGMKEVPSVNLRDYYAHKVKSLMASLTNMSRSSPSELSLNDSLR) the chain is Cytoplasmic.

The protein belongs to the potassium channel family. S (TC 1.A.1.2) subfamily. Kv9.2/KCNS2 sub-subfamily. In terms of assembly, heterotetramer with KCNB1 and KCNB2. Does not form homomultimers.

The protein resides in the cell membrane. Functionally, potassium channel regulatory subunit that modulate the delayed rectifier voltage-gated potassium channel activity of KCNB1 and KCNB2 by altering their kinetics, expression levels, and shifting the half-inactivation potential to more polarized values. While it does not form functional channels on its own, it can form functional heterotetrameric channels with KCNB1 and KCNB2. Each regulatory subunit has unique regulatory properties that can lead to extensive inhibition, significant changes in kinetics, and/or substantial shifts in the voltage dependencies of the inactivation process. The polypeptide is Delayed-rectifier potassium channel regulatory subunit KCNS2 (Homo sapiens (Human)).